The sequence spans 503 residues: Cytochrome P450 11B1, mitochondrial (503 aa).

Residues 1–24 constitute a mitochondrion transit peptide; it reads MALWAKARVWMAGPWLSLHRARPL. Position 450 (cysteine 450) interacts with heme.

This sequence belongs to the cytochrome P450 family. It depends on heme as a cofactor.

Its subcellular location is the mitochondrion inner membrane. It catalyses the reaction a steroid + 2 reduced [adrenodoxin] + O2 + 2 H(+) = an 11beta-hydroxysteroid + 2 oxidized [adrenodoxin] + H2O. It carries out the reaction 11-deoxycortisol + 2 reduced [adrenodoxin] + O2 + 2 H(+) = cortisol + 2 oxidized [adrenodoxin] + H2O. The catalysed reaction is 21-hydroxyprogesterone + 2 reduced [adrenodoxin] + O2 + 2 H(+) = corticosterone + 2 oxidized [adrenodoxin] + H2O. The enzyme catalyses corticosterone + 2 reduced [adrenodoxin] + O2 + 2 H(+) = 18-hydroxycorticosterone + 2 oxidized [adrenodoxin] + H2O. It catalyses the reaction 18-hydroxycorticosterone + 2 reduced [adrenodoxin] + O2 + 2 H(+) = aldosterone + 2 oxidized [adrenodoxin] + 2 H2O. It carries out the reaction 21-hydroxyprogesterone + 2 reduced [adrenodoxin] + O2 + 2 H(+) = 19-hydroxy-11-deoxycorticosterone + 2 oxidized [adrenodoxin] + H2O. The catalysed reaction is 19-hydroxy-11-deoxycorticosterone + 2 reduced [adrenodoxin] + O2 + 2 H(+) = 19-oxo-11-deoxycorticosterone + 2 oxidized [adrenodoxin] + 2 H2O. It participates in steroid biosynthesis; glucocorticoid biosynthesis. Its pathway is steroid hormone biosynthesis. A cytochrome P450 monooxygenase that catalyzes the biosynthesis of aldosterone and other adrenal corticoids. Differing from other species (such as human, rat and mice), it is able to catalyze three sequential oxidative reactions of 11-deoxycorticosterone (21-hydroxyprogesterone), namely 11-beta hydroxylation, followed by two successive oxidations at C18 yielding 18-hydroxy and then 18-oxo intermediates, and ending with the formation of aldosterone. Steroid 11beta, 18- and 19-hydroxylase. Mechanistically, uses molecular oxygen inserting one oxygen atom into a substrate and reducing the second into a water molecule. Two electrons are provided by NADPH via a two-protein mitochondrial transfer system comprising flavoprotein FDXR (adrenodoxin/ferredoxin reductase) and nonheme iron-sulfur protein FDX1 or FDX2 (adrenodoxin/ferredoxin). The chain is Cytochrome P450 11B1, mitochondrial (CYP11B1) from Ovis aries (Sheep).